Here is a 133-residue protein sequence, read N- to C-terminus: Nucleoside diphosphate kinase (133 aa).

Lysine 9, phenylalanine 57, arginine 85, threonine 91, arginine 102, and asparagine 112 together coordinate ATP. Histidine 115 acts as the Pros-phosphohistidine intermediate in catalysis.

This sequence belongs to the NDK family. In terms of assembly, homotetramer. Mg(2+) is required as a cofactor.

It localises to the cytoplasm. The catalysed reaction is a 2'-deoxyribonucleoside 5'-diphosphate + ATP = a 2'-deoxyribonucleoside 5'-triphosphate + ADP. It catalyses the reaction a ribonucleoside 5'-diphosphate + ATP = a ribonucleoside 5'-triphosphate + ADP. In terms of biological role, major role in the synthesis of nucleoside triphosphates other than ATP. The ATP gamma phosphate is transferred to the NDP beta phosphate via a ping-pong mechanism, using a phosphorylated active-site intermediate. The sequence is that of Nucleoside diphosphate kinase from Rubrobacter xylanophilus (strain DSM 9941 / JCM 11954 / NBRC 16129 / PRD-1).